Reading from the N-terminus, the 712-residue chain is MFDTHTVEIEWAGRPLKLETGKIARQADGAVLATYGETVVLATVVSAKAPKPGQDFFPLTVNYQEKTYAAGKIPGGYFKREGRPSENETLVSRLIDRPIRPLFPEGYKNDTQVVVTVIQHDLENNPDILSMVATSAALTLSGVPFMGPVGGARVGYINGEYVLNPHLDEMDESSLDLVVAGTYDAVLMVESEAKELPEDVMLGAVMFGHKGFQPVLDAIIKLAEVAAKEPRDFQPEDYSALESEMLGLAEAELREAYKITQKADRYAAVDAVKAKVKAHFLPEEGEAKYTAEEVGAIFKHLQAKIVRWNILDTKSRIDGRDLETVRPIVSEVGLLPRTHGSALFTRGETQAIVVATLGTGEDEQYVDSLTGMYKERFLLHYNFPPYSVGETGRMGSPGRREIGHGKLAWRAIRPMLPSAEQFPYTLRVVSEITESNGSSSMATVCGTSLALMDAGVPLAKPVAGIAMGLILEGDRFAVLSDILGDEDHLGDMDFKVAGTADGITSLQMDIKIAGITEEIMKVALSQAQGGRTHILGEMAKAITESRGQLGEFAPRIEVMNIPVDKIREVIGSGGKVIREIVEKTGAKINIEDDGTVKIASSSGKEIEAARKWIHSIVAEPEIGQIYEGTVVKTADFGAFVNFFGARDGLVHISQLASERVAKTQDVVKEGDKVWVKLLGFDERGKVRLSMKVVDQATGQEIANEKKKEEAAE.

Residues Asp487 and Asp493 each contribute to the Mg(2+) site. One can recognise a KH domain in the interval 554 to 613; sequence PRIEVMNIPVDKIREVIGSGGKVIREIVEKTGAKINIEDDGTVKIASSSGKEIEAARKWI. Residues 623–691 form the S1 motif domain; that stretch reads GQIYEGTVVK…ERGKVRLSMK (69 aa).

Belongs to the polyribonucleotide nucleotidyltransferase family. It depends on Mg(2+) as a cofactor.

It localises to the cytoplasm. It catalyses the reaction RNA(n+1) + phosphate = RNA(n) + a ribonucleoside 5'-diphosphate. Its function is as follows. Involved in mRNA degradation. Catalyzes the phosphorolysis of single-stranded polyribonucleotides processively in the 3'- to 5'-direction. The sequence is that of Polyribonucleotide nucleotidyltransferase from Rhizobium etli (strain CIAT 652).